Reading from the N-terminus, the 304-residue chain is Recombination-associated protein RdgC (304 aa).

The protein belongs to the RdgC family.

It is found in the cytoplasm. The protein resides in the nucleoid. Functionally, may be involved in recombination. This Dechloromonas aromatica (strain RCB) protein is Recombination-associated protein RdgC.